The chain runs to 262 residues: Indole-3-glycerol phosphate synthase (262 aa).

Belongs to the TrpC family.

It catalyses the reaction 1-(2-carboxyphenylamino)-1-deoxy-D-ribulose 5-phosphate + H(+) = (1S,2R)-1-C-(indol-3-yl)glycerol 3-phosphate + CO2 + H2O. The protein operates within amino-acid biosynthesis; L-tryptophan biosynthesis; L-tryptophan from chorismate: step 4/5. The polypeptide is Indole-3-glycerol phosphate synthase (Bordetella bronchiseptica (strain ATCC BAA-588 / NCTC 13252 / RB50) (Alcaligenes bronchisepticus)).